Here is a 45-residue protein sequence, read N- to C-terminus: uncharacterized protein (45 aa).

The span at Met1 to Ile26 shows a compositional bias: basic and acidic residues. Residues Met1 to Ser45 are disordered.

This is an uncharacterized protein from Bacillus subtilis (strain 168).